The sequence spans 104 residues: Large ribosomal subunit protein uL24 (104 aa).

Belongs to the universal ribosomal protein uL24 family. Part of the 50S ribosomal subunit.

In terms of biological role, one of two assembly initiator proteins, it binds directly to the 5'-end of the 23S rRNA, where it nucleates assembly of the 50S subunit. One of the proteins that surrounds the polypeptide exit tunnel on the outside of the subunit. This chain is Large ribosomal subunit protein uL24, found in Klebsiella pneumoniae (strain 342).